The following is a 442-amino-acid chain: DMATS-type prenyltransferase mfmD (442 aa).

This sequence belongs to the tryptophan dimethylallyltransferase family.

Its pathway is secondary metabolite biosynthesis; terpenoid biosynthesis. Functionally, prenyltransferase; part of the gene cluster that mediates the biosynthesis of the phthalide-terpenoid hybrid 11'-O-desmethylfendlerol. Within the pathway, mfmD is responsible for farnesylation of the cyclopolic acid intermediate via an O-prenylation reaction. The biosynthesis of 11'-O-desmethylfendlerol begins with the NR-PKS mfmB that forms 3,5-dimethylorsellinic acid (DMOA), which is then transformed into the phthalide 5,7-dihydroxy-4-(hydroxymethyl)-6-methylphthalide by the cytochrome P450 monooxygenase mfmA and the hydrolase mfmC. Subsequently, the methyltransferase mfmE catalyzes 7-O-methylation to yield 5-hydroxy-4-(hydroxymethyl)-7-methoxy-6-methylphthalide, which undergoes C-3 hydroxylation by the cytochrome P450 monooxygenase mfmF. The resultant cyclopolic acid (2,5-dihydroxy-4-(hydroxymethyl)-7-methoxy-6-methylphthalide) is then farnesylated by the DMATS-type prenyltransferase mfmD to afford 5-O-farnesylcyclopolic acid. Finally, the Pyr4-family terpene cyclase mfmH cyclizes the farnesyl moiety of 5-O-farnesylcyclopolic acid into a drimane-like structure, thus completing the biosynthesis of 11'-O-desmethylfendlerol. In Annulohypoxylon moriforme (Filamentous fungus), this protein is DMATS-type prenyltransferase mfmD.